We begin with the raw amino-acid sequence, 395 residues long: MPWSSRGALLRDLVLGVLGTAAFLLDLGTDLWAAVQYALGGRYLWAALVLALLGLASVALQLFSWLWLRADPAGLHGSQPPRRCLALLHLLQLGYLYRCVQELRQGLLVWQQEEPSEFDLAYADFLALDISMLRLFETFLETAPQLTLVLAIMLQSGRAEYYQWVGICTSFLGISWALLDYHRALRTCLPSRPLLGLGSSVIYFLWNLLLLWPRVLAVALFSALFPSYVALHFLGLWLVLLLWVWLQGTDFMPDPSSEWLYQVTVATILYFSWFNVAEGRTRGRAIIHFAFLLSDSILLVATWVTHSSWLPSGIPLQLWLPVGCGCFFLGLALRLVYYHWLHPSCCWKPDPDQVDGARSLLSPEGYQLPQNRRMTHLAQNFFPKAKDEAALPVKG.

The Cytoplasmic segment spans residues 1-12 (MPWSSRGALLRD). A helical membrane pass occupies residues 13–33 (LVLGVLGTAAFLLDLGTDLWA). Residues 34–47 (AVQYALGGRYLWAA) lie on the Extracellular side of the membrane. The helical transmembrane segment at 48-68 (LVLALLGLASVALQLFSWLWL) threads the bilayer. Residues 69–158 (RADPAGLHGS…VLAIMLQSGR (90 aa)) are Cytoplasmic-facing. A helical transmembrane segment spans residues 159-179 (AEYYQWVGICTSFLGISWALL). Residues 180–200 (DYHRALRTCLPSRPLLGLGSS) lie on the Extracellular side of the membrane. Residues 201–221 (VIYFLWNLLLLWPRVLAVALF) form a helical membrane-spanning segment. At 222-223 (SA) the chain is on the cytoplasmic side. Residues 224 to 244 (LFPSYVALHFLGLWLVLLLWV) traverse the membrane as a helical segment. Residues 245–258 (WLQGTDFMPDPSSE) lie on the Extracellular side of the membrane. The helical transmembrane segment at 259–279 (WLYQVTVATILYFSWFNVAEG) threads the bilayer. Topologically, residues 280-284 (RTRGR) are cytoplasmic. A helical membrane pass occupies residues 285–305 (AIIHFAFLLSDSILLVATWVT). Residues 306-312 (HSSWLPS) are Extracellular-facing. The chain crosses the membrane as a helical span at residues 313–333 (GIPLQLWLPVGCGCFFLGLAL). The Cytoplasmic portion of the chain corresponds to 334–395 (RLVYYHWLHP…KDEAALPVKG (62 aa)). Ser362 bears the Phosphoserine mark. Residue Thr375 is modified to Phosphothreonine.

It belongs to the XK family. Interacts with BSG and NPTN; which act as chaperones to localize XKR8 at the cell membrane. As to quaternary structure, homodimer. Post-translationally, undergoes proteolytic processing by caspase-3 (CASP3), leading to its activation. In terms of processing, phosphorylation at Thr-375 activates the phospholipid scramblase activity.

Its subcellular location is the cell membrane. The protein localises to the cytoplasm. The protein resides in the perinuclear region. The catalysed reaction is a 1,2-diacyl-sn-glycero-3-phospho-L-serine(in) = a 1,2-diacyl-sn-glycero-3-phospho-L-serine(out). Activated upon caspase cleavage to generate the XK-related protein 8, processed form. Does not act prior the onset of apoptosis. Functionally, phospholipid scramblase that promotes phosphatidylserine exposure on apoptotic cell surface. Phosphatidylserine is a specific marker only present at the surface of apoptotic cells and acts as a specific signal for engulfment. Required for the clearance of apoptotic cells, such as engulfment of apoptotic germ cells by Sertoli cells, clearance of senescent neutrophils or regulation of bipolar cell numbers in the retina. Has no effect on calcium-induced exposure of phosphatidylserine. Promotes myoblast differentiation and survival. This is XK-related protein 8 from Pan troglodytes (Chimpanzee).